A 60-amino-acid chain; its full sequence is MGNPARKFSKARRDSRRAQTFKLSLPGMVECPNCHEMKLAHRVCKKCGYYKGKEIVAVEK.

Belongs to the bacterial ribosomal protein bL32 family.

This is Large ribosomal subunit protein bL32 from Clostridium acetobutylicum (strain ATCC 824 / DSM 792 / JCM 1419 / IAM 19013 / LMG 5710 / NBRC 13948 / NRRL B-527 / VKM B-1787 / 2291 / W).